An 853-amino-acid chain; its full sequence is DNA mismatch repair protein MutS (853 aa).

614–621 (GPNMGGKS) lines the ATP pocket.

It belongs to the DNA mismatch repair MutS family.

This protein is involved in the repair of mismatches in DNA. It is possible that it carries out the mismatch recognition step. This protein has a weak ATPase activity. This Cronobacter sakazakii (strain ATCC BAA-894) (Enterobacter sakazakii) protein is DNA mismatch repair protein MutS.